Here is a 539-residue protein sequence, read N- to C-terminus: Glutamyl-tRNA(Gln) amidotransferase subunit B, mitochondrial (539 aa).

The protein belongs to the GatB/GatE family. GatB subfamily. Subunit of the heterotrimeric GatFAB amidotransferase (AdT) complex, composed of A, B and F subunits.

The protein resides in the mitochondrion. The enzyme catalyses L-glutamyl-tRNA(Gln) + L-glutamine + ATP + H2O = L-glutaminyl-tRNA(Gln) + L-glutamate + ADP + phosphate + H(+). In terms of biological role, allows the formation of correctly charged Gln-tRNA(Gln) through the transamidation of misacylated Glu-tRNA(Gln) in the mitochondria. The reaction takes place in the presence of glutamine and ATP through an activated gamma-phospho-Glu-tRNA(Gln). This Kluyveromyces lactis (strain ATCC 8585 / CBS 2359 / DSM 70799 / NBRC 1267 / NRRL Y-1140 / WM37) (Yeast) protein is Glutamyl-tRNA(Gln) amidotransferase subunit B, mitochondrial.